The sequence spans 347 residues: Leucine-rich repeat-containing protein 69 (347 aa).

LRR repeat units lie at residues 15 to 37 (NTKILTLNGKRITKMPSTLEKLP), 38 to 60 (NLKTLDLQNNSISKVCPELRTLT), 61 to 82 (QLTLLNLGNNHLQEVPEEIKYL), 84 to 105 (SLKNLHLFGNRICRIAPGVFNG), 108 to 129 (RLIMLNLNDNRLTSLPQEIGRL), 131 to 152 (SLTYLSLNRNNLTVIPKELCSL), 154 to 175 (HLSELHLNYNQIVYIPEEIKFL), 177 to 198 (NLQQLFLVRNNIEELPEEICHL), and 200 to 222 (KLRVLDIAGNVIQIFPAGFQNLR).

This sequence belongs to the LRRC69 family.

In Mus musculus (Mouse), this protein is Leucine-rich repeat-containing protein 69 (Lrrc69).